Consider the following 37-residue polypeptide: Large ribosomal subunit protein bL36c (37 aa).

The protein belongs to the bacterial ribosomal protein bL36 family.

It localises to the plastid. The protein resides in the chloroplast. The polypeptide is Large ribosomal subunit protein bL36c (Jasminum nudiflorum (Winter jasmine)).